A 336-amino-acid chain; its full sequence is 4-hydroxy-3-methylbut-2-enyl diphosphate reductase (336 aa).

Cys37 contributes to the [4Fe-4S] cluster binding site. Residues His66 and His99 each contribute to the (2E)-4-hydroxy-3-methylbut-2-enyl diphosphate site. Dimethylallyl diphosphate contacts are provided by His66 and His99. Residues His66 and His99 each coordinate isopentenyl diphosphate. Residue Cys121 coordinates [4Fe-4S] cluster. Position 149 (His149) interacts with (2E)-4-hydroxy-3-methylbut-2-enyl diphosphate. Dimethylallyl diphosphate is bound at residue His149. Isopentenyl diphosphate is bound at residue His149. Glu151 functions as the Proton donor in the catalytic mechanism. Thr189 provides a ligand contact to (2E)-4-hydroxy-3-methylbut-2-enyl diphosphate. Residue Cys219 coordinates [4Fe-4S] cluster. 4 residues coordinate (2E)-4-hydroxy-3-methylbut-2-enyl diphosphate: Ser247, Ser248, Asn249, and Ser292. 4 residues coordinate dimethylallyl diphosphate: Ser247, Ser248, Asn249, and Ser292. The isopentenyl diphosphate site is built by Ser247, Ser248, Asn249, and Ser292.

This sequence belongs to the IspH family. [4Fe-4S] cluster is required as a cofactor.

The enzyme catalyses isopentenyl diphosphate + 2 oxidized [2Fe-2S]-[ferredoxin] + H2O = (2E)-4-hydroxy-3-methylbut-2-enyl diphosphate + 2 reduced [2Fe-2S]-[ferredoxin] + 2 H(+). The catalysed reaction is dimethylallyl diphosphate + 2 oxidized [2Fe-2S]-[ferredoxin] + H2O = (2E)-4-hydroxy-3-methylbut-2-enyl diphosphate + 2 reduced [2Fe-2S]-[ferredoxin] + 2 H(+). It participates in isoprenoid biosynthesis; dimethylallyl diphosphate biosynthesis; dimethylallyl diphosphate from (2E)-4-hydroxy-3-methylbutenyl diphosphate: step 1/1. Its pathway is isoprenoid biosynthesis; isopentenyl diphosphate biosynthesis via DXP pathway; isopentenyl diphosphate from 1-deoxy-D-xylulose 5-phosphate: step 6/6. Catalyzes the conversion of 1-hydroxy-2-methyl-2-(E)-butenyl 4-diphosphate (HMBPP) into a mixture of isopentenyl diphosphate (IPP) and dimethylallyl diphosphate (DMAPP). Acts in the terminal step of the DOXP/MEP pathway for isoprenoid precursor biosynthesis. The polypeptide is 4-hydroxy-3-methylbut-2-enyl diphosphate reductase (Rhodococcus opacus (strain B4)).